Reading from the N-terminus, the 780-residue chain is ATP-dependent 6-phosphofructokinase, muscle type (780 aa).

An N-acetylthreonine modification is found at Thr2. The N-terminal catalytic PFK domain 1 stretch occupies residues 2 to 390; the sequence is THEEHHAAKS…NWEVYKLLAH (389 aa). ATP-binding positions include Gly25, 88 to 89, and 118 to 121; these read RC and GDGS. Asp119 lines the Mg(2+) pocket. Residues 164 to 166, Arg201, 208 to 210, Glu264, Arg292, and 298 to 301 each bind substrate; these read SID, MGR, and HVQR. Asp166 functions as the Proton acceptor in the catalytic mechanism. Ser377 carries the post-translational modification Phosphoserine. Positions 391-401 are interdomain linker; sequence VRPPVTKSGSY. The segment at 402 to 780 is C-terminal regulatory PFK domain 2; the sequence is TVAVMNVGAP…TRKRSGEATI (379 aa). Residues Arg471 and 528–532 contribute to the beta-D-fructose 2,6-bisphosphate site; that span reads TVSNN. Ser530 carries an O-linked (GlcNAc) serine glycan. N6-(2-hydroxyisobutyryl)lysine is present on Lys557. Beta-D-fructose 2,6-bisphosphate contacts are provided by residues Arg566, 573 to 575, Glu629, Arg655, and 661 to 664; these read MGG and HMQQ. A Phosphoserine modification is found at Ser667. Arg735 lines the beta-D-fructose 2,6-bisphosphate pocket. Ser775 bears the Phosphoserine mark.

It belongs to the phosphofructokinase type A (PFKA) family. ATP-dependent PFK group I subfamily. Eukaryotic two domain clade 'E' sub-subfamily. As to quaternary structure, homo- and heterotetramers. Phosphofructokinase (PFK) enzyme functions as a tetramer composed of different combinations of 3 types of subunits, called PFKM (M), PFKL (L) and PFKP (P). The composition of the PFK tetramer differs according to the tissue type it is present in. The kinetic and regulatory properties of the tetrameric enzyme are dependent on the subunit composition, hence can vary across tissues. Interacts (via C-terminus) with HK1 (via N-terminal spermatogenic cell-specific region). Mg(2+) is required as a cofactor. In terms of processing, glcNAcylation decreases enzyme activity.

The protein resides in the cytoplasm. The enzyme catalyses beta-D-fructose 6-phosphate + ATP = beta-D-fructose 1,6-bisphosphate + ADP + H(+). The protein operates within carbohydrate degradation; glycolysis; D-glyceraldehyde 3-phosphate and glycerone phosphate from D-glucose: step 3/4. Allosterically activated by ADP, AMP, or fructose 2,6-bisphosphate, and allosterically inhibited by ATP or citrate. Its function is as follows. Catalyzes the phosphorylation of D-fructose 6-phosphate to fructose 1,6-bisphosphate by ATP, the first committing step of glycolysis. This Sus scrofa (Pig) protein is ATP-dependent 6-phosphofructokinase, muscle type (PFKM).